A 116-amino-acid polypeptide reads, in one-letter code: Cuticle protein AM1274 (116 aa).

The residue at position 1 (glutamine 1) is a Pyrrolidone carboxylic acid. A disordered region spans residues 1–22 (QLANEPPIEIIRQESTDNGDGN). The Chitin-binding type R&amp;R domain occupies 20–85 (DGNFNFLFET…PVSDFIPTPH (66 aa)). Threonine 83 carries an O-linked (HexNAc) threonine glycan.

As to expression, arthrodial membrane.

This chain is Cuticle protein AM1274, found in Cancer pagurus (Rock crab).